An 892-amino-acid chain; its full sequence is Putative leucine-rich repeat receptor-like serine/threonine-protein kinase At2g04300 (892 aa).

A signal peptide spans 1–26 (MKTHPQAILLCVLFFITFGLLHVVEA). The Extracellular segment spans residues 27–523 (GNQEGFISLD…GAKKKNVVVL (497 aa)). 5 N-linked (GlcNAc...) asparagine glycosylation sites follow: Asn-99, Asn-186, Asn-241, Asn-267, and Asn-294. 4 LRR repeats span residues 375 to 396 (IKNI…PCVP), 399 to 422 (FMWD…FLNL), 423 to 444 (SSSH…LQNL), and 447 to 467 (SNNN…SLLV). N-linked (GlcNAc...) asparagine glycans are attached at residues Asn-407, Asn-421, Asn-437, Asn-450, and Asn-469. The chain crosses the membrane as a helical span at residues 524–544 (VVVSIALVVVLGSALALFLVF). At 545–892 (RKRKTPRNEV…FGTEYTPEAR (348 aa)) the chain is on the cytoplasmic side. Thr-573 is modified (phosphothreonine). The Protein kinase domain occupies 582–855 (NNFEKILGKG…QVVIELNECL (274 aa)). ATP is bound by residues 588-596 (LGKGGFGMV) and Lys-610. A Phosphotyrosine modification is found at Tyr-655. Residue Asp-707 is the Proton acceptor of the active site. Thr-742 and Thr-747 each carry phosphothreonine. Tyr-755 carries the phosphotyrosine modification.

The protein belongs to the protein kinase superfamily. Ser/Thr protein kinase family.

The protein localises to the cell membrane. It catalyses the reaction L-seryl-[protein] + ATP = O-phospho-L-seryl-[protein] + ADP + H(+). It carries out the reaction L-threonyl-[protein] + ATP = O-phospho-L-threonyl-[protein] + ADP + H(+). The sequence is that of Putative leucine-rich repeat receptor-like serine/threonine-protein kinase At2g04300 from Arabidopsis thaliana (Mouse-ear cress).